The chain runs to 237 residues: Urease accessory protein UreF (237 aa).

The protein belongs to the UreF family. In terms of assembly, ureD, UreF and UreG form a complex that acts as a GTP-hydrolysis-dependent molecular chaperone, activating the urease apoprotein by helping to assemble the nickel containing metallocenter of UreC. The UreE protein probably delivers the nickel.

The protein resides in the cytoplasm. In terms of biological role, required for maturation of urease via the functional incorporation of the urease nickel metallocenter. This Streptococcus thermophilus (strain ATCC BAA-250 / LMG 18311) protein is Urease accessory protein UreF.